The chain runs to 1348 residues: Adhesion G protein-coupled receptor F5 (1348 aa).

The N-terminal stretch at 1-21 is a signal peptide; sequence MRSPRTFTFYFLLLVICSSEA. The Extracellular segment spans residues 22–1019; sequence ALSTPTEPIV…LKILLDIISY (998 aa). Positions 163–271 constitute an SEA domain; the sequence is PEAFITLKLK…NSFQGTPSNE (109 aa). 3 Ig-like domains span residues 268–366, 367–464, and 469–559; these read PSNE…LDVT, PIRI…IAVT, and ANLT…KDVT. 4 N-linked (GlcNAc...) asparagine glycosylation sites follow: Asn270, Asn286, Asn337, and Asn349. Residues Cys291 and Cys348 are joined by a disulfide bond. Residues Cys389 and Cys447 are joined by a disulfide bond. Residues Asn470, Asn538, and Asn665 are each glycosylated (N-linked (GlcNAc...) asparagine). Cys490 and Cys543 are oxidised to a cystine. Residue Ser818 is modified to Phosphoserine. A GAIN-B domain is found at 841 to 1005; that stretch reads TPPFLAHPNV…SILMSPDSPD (165 aa). Cystine bridges form between Cys953–Cys987 and Cys972–Cys989. The GPS stretch occupies residues 953–1005; the sequence is CVFWNFSLANNTGGWDSSGCSVEDDGRDNRDRVFCKCNHLTSFSILMSPDSPD. Residues 993–1008 are tethered agonist; sequence TSFSILMSPDSPDPGS. The helical transmembrane segment at 1020 to 1040 threads the bilayer; that stretch reads IGLGFSIVSLAACLVVEAMVW. Residues 1041 to 1055 are Cytoplasmic-facing; that stretch reads KSVTKNRTSYMRHIC. Residues 1056–1076 form a helical membrane-spanning segment; the sequence is IVNIAFCLLIADIWFIVAGAI. At 1077–1092 the chain is on the extracellular side; sequence HDGRYPLNETACVAAT. The chain crosses the membrane as a helical span at residues 1093 to 1113; that stretch reads FFIHFFYLSVFFWMLTLGLML. Residues 1114 to 1130 are Cytoplasmic-facing; that stretch reads FYRLIFILHDASKSTQK. Residues 1131 to 1151 form a helical membrane-spanning segment; it reads AIAFSLGYGCPLIISSITVGV. At 1152-1175 the chain is on the extracellular side; the sequence is TQPQEVYMRKNACWLNWEDTRALL. Residues 1176-1196 form a helical membrane-spanning segment; that stretch reads AFAIPALIIVVVNVSITVVVI. The Cytoplasmic portion of the chain corresponds to 1197–1221; sequence TKILRPSIGDKPGKQEKSSLFQISK. A helical transmembrane segment spans residues 1222-1242; it reads SIGVLTPLLGLTWGFGLATVI. At 1243-1250 the chain is on the extracellular side; that stretch reads QGSNAVFH. The chain crosses the membrane as a helical span at residues 1251 to 1271; the sequence is IIFTLLNAFQGLFILLFGCLW. Residues 1272-1348 lie on the Cytoplasmic side of the membrane; sequence DQKVQEALLH…NSSSAYSLLN (77 aa). Thr1302 carries the post-translational modification Phosphothreonine. Ser1309 carries the phosphoserine modification. Residues 1328–1348 form a disordered region; the sequence is STPETTSSSLENSSSAYSLLN.

It belongs to the G-protein coupled receptor 2 family. Adhesion G-protein coupled receptor (ADGR) subfamily. In terms of assembly, homodimer; disulfide-linked. Heterodimer of 2 chains generated by proteolytic processing; the large extracellular N-terminal fragment and the membrane-bound C-terminal fragment predominantly remain associated and non-covalently linked. Fragment generates by the processing enzyme furin remains attached to the extracellular N-terminal fragment. Interacts (via N-terminal extracellular domain) with SFTPD. Post-translationally, highly glycosylated. Proteolytically cleaved at multiple sites: one in the GPS region of the GAIN-B domain (S1 site) and the other in the SEA domain (S2 site). The proteolytic cleavage at S1 site generates an extracellular subunit and a seven-transmembrane subunit. The proteolytic cleavage at S2 site generates a fragment that undergoes proteolytic cleavage by the processing enzyme furin. In terms of tissue distribution, widely expressed, with highest levels in lung, pancreas, kidney and heart. In the kidney, expressed more abundantly in the medulla than in the cortex, predominantly expressed in A-intercalated cells (at protein level). Expressed in endothelial cells from various tissues, including brain, heart, kidney, liver, lung and muscle. In the lung, expressed in alveolar type II (ATII) cells (at protein level). Expressed in pancreatic islets of Langerhans, predominantly in delta cells, as well as in endothelial cells. Expressed in white adipose tissue.

The protein resides in the cell membrane. With respect to regulation, as an adhesion G protein-coupled receptor (aGPCR) exhibits a large N-terminal extracellular domain containing highly conserved GPCR autoproteolysis-inducing (GAIN) domain. During synthesis, intracellular autoproteolytic processing of nascent chain within the GAIN domain generates a mature protein, consisting of an N-terminal fragment that is non-covalently linked to the C-terminal fragment. The mature protein is routed to the plasma membrane where the N- and C-terminal fragments remain associated, forming the holoreceptor. Dissociation of the aGPCR fragments stimulates G protein signaling through the action of the tethered-peptide agonist stalk that is occluded within the GAIN domain in the holoreceptor form. This dissociation might be induced by ligand binding, such as that of sFNDC4. Its function is as follows. Adhesion G protein-coupled receptor. In alveolar type II (ATII or AT2) cells, required for normal lung surfactant homeostasis. Modulation of both surfactant secretion and uptake by ATII cells is mediated by the downstream activation of GNAQ/GNA11 proteins and may be a consequence of increased cortical F-actin assembly induced by ADGRF5 activation. In the kidney, may play a role in the regulation of acid excretion into the primary urine, possibly by regulating the surface expression of V-ATPase proton pump. As a receptor for soluble FNDC4 (sFNDC4), required for proper systemic glucose tolerance, specifically sensitizing white adipose tissue to insulin. Also plays a role in sFNDC4-induced decrease of local inflammation in white adipose tissue. This chain is Adhesion G protein-coupled receptor F5 (Adgrf5), found in Mus musculus (Mouse).